A 424-amino-acid polypeptide reads, in one-letter code: Calreticulin-3 (424 aa).

Residues 1–28 (MGLPQNKLSFFCFFFLVSVLTLAPLAFS) form the signal peptide. N-linked (GlcNAc...) asparagine glycosylation is present at Asn97. An intrachain disulfide couples Cys114 to Cys146. 4 residues coordinate an alpha-D-glucoside: Tyr118, Lys120, Tyr137, and Asp144. Repeat copies occupy residues 200 to 211 (REFGSMYTDWDI), 219 to 230 (VKNAKKPEDWDD), 236 to 247 (DPNDVKPEGFDS), 254 to 265 (DRKAKEPEDWDE), 269 to 279 (GLWEPPKIPNS), 283 to 293 (GPWKAKRIKNP), and 297 to 307 (GKWKNPWIDNP). The segment at 200–265 (REFGSMYTDW…KAKEPEDWDE (66 aa)) is 4 X approximate repeats. The span at 228-237 (WDDREYIDDP) shows a compositional bias: acidic residues. The tract at residues 228-275 (WDDREYIDDPNDVKPEGFDSIPREIPDRKAKEPEDWDEEENGLWEPPK) is disordered. The span at 238–260 (NDVKPEGFDSIPREIPDRKAKEP) shows a compositional bias: basic and acidic residues. The 3 X approximate repeats stretch occupies residues 269-307 (GLWEPPKIPNSAYKGPWKAKRIKNPNYKGKWKNPWIDNP). Residue Glu327 participates in an alpha-D-glucoside binding. Residues 368-401 (FAEAEKERKAREDEEARIAREEGERRRKERDHRY) are compositionally biased toward basic and acidic residues. Residues 368–424 (FAEAEKERKAREDEEARIAREEGERRRKERDHRYGDRRRRYKRPNPRDYMDDYHDEL) form a disordered region. Residues 402–411 (GDRRRRYKRP) show a composition bias toward basic residues. Over residues 412–424 (NPRDYMDDYHDEL) the composition is skewed to basic and acidic residues. The Prevents secretion from ER motif lies at 421–424 (HDEL).

This sequence belongs to the calreticulin family.

It is found in the endoplasmic reticulum lumen. Functionally, molecular calcium-binding chaperone promoting folding, oligomeric assembly and quality control in the ER via the calreticulin/calnexin cycle. This lectin may interact transiently with almost all of the monoglucosylated glycoproteins that are synthesized in the ER. Required for elongation factor Tu receptor (EFR) accumulation and for EFR, but not flagellin-sensing 2 (FLS2) signaling. The sequence is that of Calreticulin-3 (CRT3) from Arabidopsis thaliana (Mouse-ear cress).